The following is a 1063-amino-acid chain: Integrin alpha-8 (1063 aa).

The first 38 residues, 1–38 (MSPGASRGPRGSQAPLIAPLCCAAAALGMLLWSPACQA), serve as a signal peptide directing secretion. Over 39 to 1012 (FNLDVEKLTV…TPNVSFSIPL (974 aa)) the chain is Extracellular. FG-GAP repeat units follow at residues 44–105 (EKLT…GSAQ), 122–183 (NGTK…AYAE), 188–240 (RNSN…IANY), 253–306 (KQTE…STDM), 307–372 (TFIQ…LLFR), 373–431 (DPQI…GLNT), and 435–498 (QVLQ…LHPM). N81 carries N-linked (GlcNAc...) asparagine glycosylation. C96 and C106 are joined by a disulfide. Residue N122 is glycosylated (N-linked (GlcNAc...) asparagine). C150 and C171 are disulfide-bonded. An N-linked (GlcNAc...) asparagine glycan is attached at N177. C187 and C200 are oxidised to a cystine. An N-linked (GlcNAc...) asparagine glycan is attached at N239. Residues E275, T277, D279, and E283 each coordinate Ca(2+). N302 and N311 each carry an N-linked (GlcNAc...) asparagine glycan. Ca(2+) contacts are provided by D329, N331, D333, L335, D337, D395, N397, D399, Y401, and D403. Positions 455–457 (RGD) match the Cell attachment site motif. Ca(2+) is bound by residues D459, D461, N463, Y465, and D467. An N-linked (GlcNAc...) asparagine glycan is attached at N504. 2 cysteine pairs are disulfide-bonded: C507/C518 and C524/C580. N-linked (GlcNAc...) asparagine glycosylation is found at N601 and N605. 2 disulfide bridges follow: C641–C647 and C713–C726. 6 N-linked (GlcNAc...) asparagine glycosylation sites follow: N719, N737, N753, N780, N896, and N923. Disulfide bonds link C867-C924 and C929-C934. Residue N1005 is glycosylated (N-linked (GlcNAc...) asparagine). The helical transmembrane segment at 1013-1033 (WVIILAILLGLLVLAILTLAL) threads the bilayer. Residues 1034–1063 (WKCGFFDRARPPQEDMTDREQLTNDKTPEA) lie on the Cytoplasmic side of the membrane.

Belongs to the integrin alpha chain family. Heterodimer of an alpha and a beta subunit. The alpha subunit is composed of a heavy and a light chain linked by a disulfide bond. Alpha-8 associates with beta-1. Expressed in mesenchymal cells, including alveolar myofibroblasts, kidney mesangial cells and hepatic stellar cells and vascular and visceral smooth muscle (at protein level).

The protein localises to the membrane. It is found in the cell membrane. Its function is as follows. Integrin alpha-8/beta-1 functions in the genesis of kidney and probably of other organs by regulating the recruitment of mesenchymal cells into epithelial structures. It recognizes the sequence R-G-D in a wide array of ligands including TNC, FN1, SPP1 TGFB1, TGFB3 and VTN. NPNT is probably its functional ligand in kidney genesis. Neuronal receptor for TNC it mediates cell-cell interactions and regulates neurite outgrowth of sensory and motor neurons. This Homo sapiens (Human) protein is Integrin alpha-8 (ITGA8).